The primary structure comprises 191 residues: Adenylate kinase (191 aa).

9–17 (GVPGVGATT) contacts ATP.

The protein belongs to the archaeal adenylate kinase family.

The protein localises to the cytoplasm. The catalysed reaction is AMP + ATP = 2 ADP. In Methanopyrus kandleri (strain AV19 / DSM 6324 / JCM 9639 / NBRC 100938), this protein is Adenylate kinase.